The sequence spans 349 residues: MEDPQSKEPAGEAVALALLESPRPEGGEEPPRPSPEETQQCKFDGQETKGSKFITSSASDFSDPVYKEIAITNGCINRMSKEELRAKLSEFKLETRGVKDVLKKRLKNYYKKQKLMLKESNFADSYYDYICIIDFEATCEEGNPPEFVHEIIEFPVVLLNTHTLEIEDTFQQYVRPEINTQLSDFCISLTGITQDQVDRADTFPQVLKKVIDWMKLKELGTKYKYSLLTDGSWDMSKFLNIQCQLSRLKYPPFAKKWINIRKSYGNFYKVPRSQTKLTIMLEKLGMDYDGRPHCGLDDSKNIARIAVRMLQDGCELRINEKMHAGQLMSVSSSLPIEGTPPPQMPHFRK.

Basic and acidic residues-rich tracts occupy residues methionine 1–alanine 10 and proline 22–proline 35. Positions methionine 1 to threonine 48 are disordered. Phosphoserine is present on residues serine 59 and serine 62. Positions isoleucine 76–tyrosine 110 constitute an SAP domain. The region spanning isoleucine 130–alanine 306 is the Exonuclease domain. Mg(2+) contacts are provided by aspartate 134 and glutamate 136. Glutamate 136 acts as the Proton acceptor in catalysis. AMP-binding residues include glutamate 136 and alanine 137. A Mg(2+)-binding site is contributed by aspartate 234. Histidine 293 (proton acceptor) is an active-site residue. Position 293 (histidine 293) interacts with AMP. Mg(2+) is bound at residue aspartate 298.

As to quaternary structure, identified in a histone pre-mRNA complex, at least composed of ERI1, LSM11, SLBP, SNRPB, SYNCRIP and YBX1. Interacts in a cooperative manner with SLBP to the mature 3'-end of histone mRNAs. Binds to 40S and 60S ribosomal subunits and to 80S assembled ribosomes. Found in a ternary complex with SLBP and the stem-loop structure of the 3'-end of histone mRNAs. Requires Mg(2+) as cofactor.

The protein localises to the cytoplasm. It localises to the nucleus. The protein resides in the nucleolus. It carries out the reaction Exonucleolytic cleavage in the 3'- to 5'-direction to yield nucleoside 5'-phosphates.. Its activity is regulated as follows. Although it can bind simultaneously with SLBP to the 3'-end of histone mRNA, the presence of SLBP prevents the exonuclease activity. In terms of biological role, RNA exonuclease that binds to the 3'-end of histone mRNAs and degrades them, suggesting that it plays an essential role in histone mRNA decay after replication. A 2' and 3'-hydroxyl groups at the last nucleotide of the histone 3'-end is required for efficient 3'-end histone mRNA exonuclease activity and degradation of RNA substrates. Also able to degrade the 3'-overhangs of short interfering RNAs (siRNAs) in vitro, suggesting a possible role as regulator of RNA interference (RNAi). Required for binding the 5'-ACCCA-3' sequence present in stem-loop structure. Able to bind other mRNAs. Required for 5.8S rRNA 3'-end processing. Also binds to 5.8s ribosomal RNA. Binds with high affinity to the stem-loop structure of replication-dependent histone pre-mRNAs. In vitro, does not have sequence specificity. In vitro, has weak DNA exonuclease activity. In vitro, shows biphasic kinetics such that there is rapid hydrolysis of the last three unpaired RNA nucleotides in the 39 flanking sequence followed by a much slower cleavage through the stem that occurs over a longer incubation period in the order of hours. ERI1-mediated RNA metabolism plays a key role in chondrogenesis. The protein is 3'-5' exoribonuclease 1 of Homo sapiens (Human).